The chain runs to 689 residues: Glycine--tRNA ligase beta subunit (689 aa).

This sequence belongs to the class-II aminoacyl-tRNA synthetase family. Tetramer of two alpha and two beta subunits.

It localises to the cytoplasm. The enzyme catalyses tRNA(Gly) + glycine + ATP = glycyl-tRNA(Gly) + AMP + diphosphate. This chain is Glycine--tRNA ligase beta subunit, found in Shigella dysenteriae serotype 1 (strain Sd197).